The chain runs to 407 residues: MKYDHLLVRYGELTLKGSNRKKFVNQLRNNVNKSLKGLDGFVVKGKRDRMYIELEDHADINEITYRLSKIFGIKSISPVLKVEKTIEAISAAAIKFAQQFEENSTFKIDVKRADKNFPMDTYELQRELGGAVLKHFDNISVNVKRPDHEIRVEVRLDAIYMYEEVVPGSGGLPVGTGGKTLLMLSGGIDSPVAGMEVMRRGVTIEAIHFHSPPFTSDQAKEKVIELTRILAERVGPIKLHIVPFTELQKQVNKVVHPRYTMTSTRRMMMRVADKLVHQIGALAIVNGENLGQVASQTLHSMYAINNVTSTPVLRPLLTYDKEEIIIKSKEIGTFETSIQPFEDCCTIFTPKNPVTEPNFDKVVQYESVFDFEEMINRAVENIETLEITSDYKTIKEQQTNQLINDFL.

In terms of domain architecture, THUMP spans 61–165 (NEITYRLSKI…LDAIYMYEEV (105 aa)). ATP-binding positions include 183–184 (ML), 208–209 (HF), R265, G287, and Q296.

This sequence belongs to the ThiI family.

The protein resides in the cytoplasm. The enzyme catalyses [ThiI sulfur-carrier protein]-S-sulfanyl-L-cysteine + a uridine in tRNA + 2 reduced [2Fe-2S]-[ferredoxin] + ATP + H(+) = [ThiI sulfur-carrier protein]-L-cysteine + a 4-thiouridine in tRNA + 2 oxidized [2Fe-2S]-[ferredoxin] + AMP + diphosphate. It carries out the reaction [ThiS sulfur-carrier protein]-C-terminal Gly-Gly-AMP + S-sulfanyl-L-cysteinyl-[cysteine desulfurase] + AH2 = [ThiS sulfur-carrier protein]-C-terminal-Gly-aminoethanethioate + L-cysteinyl-[cysteine desulfurase] + A + AMP + 2 H(+). It participates in cofactor biosynthesis; thiamine diphosphate biosynthesis. In terms of biological role, catalyzes the ATP-dependent transfer of a sulfur to tRNA to produce 4-thiouridine in position 8 of tRNAs, which functions as a near-UV photosensor. Also catalyzes the transfer of sulfur to the sulfur carrier protein ThiS, forming ThiS-thiocarboxylate. This is a step in the synthesis of thiazole, in the thiamine biosynthesis pathway. The sulfur is donated as persulfide by IscS. This is Probable tRNA sulfurtransferase from Staphylococcus aureus (strain NCTC 8325 / PS 47).